Consider the following 164-residue polypeptide: MRSLDRYAIFILLACGLLWRPCLSSVPMPCCPIDSKKDVSGLPSVFEVKEIFFNYPQTCNYTNVAQFTYVPQGANVSTVVCANGFNLMSFILAVLQRVFEKPHNMGLLAENINKIRTDYALNFTAVNSESSRFNVVPVGRNGKVVTTTRVVKRSARSGSGAPPG.

A signal peptide spans 1–24; it reads MRSLDRYAIFILLACGLLWRPCLS.

Belongs to the herpesviridae glycoprotein L family. In terms of assembly, interacts with glycoprotein H (gH); this interaction is necessary for the correct processing and cell surface expression of gH. The heterodimer gH/gL seems to interact with gB trimers during fusion.

The protein resides in the virion membrane. The protein localises to the host cell membrane. It is found in the host Golgi apparatus. It localises to the host trans-Golgi network. Its function is as follows. The heterodimer glycoprotein H-glycoprotein L is required for the fusion of viral and plasma membranes leading to virus entry into the host cell. Acts as a functional inhibitor of gH and maintains gH in an inhibited form. Upon binding to host integrins, gL dissociates from gH leading to activation of the viral fusion glycoproteins gB and gH. The protein is Envelope glycoprotein L of Equine herpesvirus 2 (strain 86/87) (EHV-2).